The chain runs to 887 residues: Valine--tRNA ligase (887 aa).

Positions 47–57 (PNVTGALHMGH) match the 'HIGH' region motif. Residues 527–531 (KMSKS) carry the 'KMSKS' region motif. An ATP-binding site is contributed by Lys530. Residues 817–885 (LVNVEEEEKR…LLASLEKIRK (69 aa)) are a coiled coil.

The protein belongs to the class-I aminoacyl-tRNA synthetase family. ValS type 1 subfamily. Monomer.

Its subcellular location is the cytoplasm. The enzyme catalyses tRNA(Val) + L-valine + ATP = L-valyl-tRNA(Val) + AMP + diphosphate. Its function is as follows. Catalyzes the attachment of valine to tRNA(Val). As ValRS can inadvertently accommodate and process structurally similar amino acids such as threonine, to avoid such errors, it has a 'posttransfer' editing activity that hydrolyzes mischarged Thr-tRNA(Val) in a tRNA-dependent manner. The chain is Valine--tRNA ligase from Geobacter sulfurreducens (strain ATCC 51573 / DSM 12127 / PCA).